The sequence spans 858 residues: Phospholipase D gamma 1 (858 aa).

The region spanning 27–163 (PFATSSGSLR…CSGNRIEGLF (137 aa)) is the C2 domain. D225 is a binding site for Ca(2+). A PLD phosphodiesterase 1 domain is found at 364–399 (TIYTHHQKTVIVDAEAAQNRRKIVAFVGGLDLCNGR). Residues H369, K371, and D376 contribute to the active site. H369 lines the a 1,2-diacyl-sn-glycero-3-phosphate pocket. Ca(2+)-binding residues include H405 and H437. Q565 lines the a 1,2-diacyl-sn-glycero-3-phosphate pocket. S680 is subject to Phosphoserine. Residues 704–731 (FMIYVHSKGMVVDDEFVLIGSANINQRS) form the PLD phosphodiesterase 2 domain. Active-site residues include H709, K711, and D716. Residue H709 participates in a 1,2-diacyl-sn-glycero-3-phosphate binding. E772 lines the Ca(2+) pocket.

This sequence belongs to the phospholipase D family. C2-PLD subfamily. Ca(2+) serves as cofactor. Highly expressed in roots and flowers, moderately in stems, leaves and seedlings and low in siliques. Not detected in seeds.

It is found in the cytoplasm. The protein localises to the membrane. The enzyme catalyses a 1,2-diacyl-sn-glycero-3-phosphocholine + H2O = a 1,2-diacyl-sn-glycero-3-phosphate + choline + H(+). Inhibited by neomycin. Up-regulated by PIP2 binding. Hydrolyzes glycerol-phospholipids at the terminal phosphodiesteric bond to generate phosphatidic acids (PA). Plays an important role in various cellular processes, including phytohormone action, vesicular trafficking, secretion, cytoskeletal arrangement, meiosis, tumor promotion, pathogenesis, membrane deterioration and senescence. Can use phosphatidylserine (PS) and phosphatidylethanolamine (PE) as substrates only in the presence of PIP2. Can use phosphatidylcholine (PC), phosphatidylglycerol (PG) or N-acylphosphatidylethanolamine (NAPE) as substrates in the presence of PE and PIP2. Involved in membrane lipid modulation under aluminum (Al) stress and negatively modulate plant tolerance to Al. The chain is Phospholipase D gamma 1 from Arabidopsis thaliana (Mouse-ear cress).